Reading from the N-terminus, the 451-residue chain is UPF0210 protein APL_1491 (451 aa).

This sequence belongs to the UPF0210 family. In terms of assembly, homodimer.

This chain is UPF0210 protein APL_1491, found in Actinobacillus pleuropneumoniae serotype 5b (strain L20).